Here is a 761-residue protein sequence, read N- to C-terminus: MTTTHILGYPRIGEKRELKFALEKYWRGEIDQAALKQVGSQIRQKNWALQKEAGLDFVTAGDFAWYDHVLTTTLLLGHVPKRHSHGFPDLDTLFRVGRGQSQNACGCGTGSAASDMTKWFNTNYHYIVPEFSSNDTFNVSWPQLFEEVNEALQAGHDVKPVLLGPISYLYLGKEVEEGFDRLTLLPRLLTAYQAILSKLAKQGVQWVQIDEPILALELEPRWQEAFKLAYQVIRGDVKLLLTTYFDSVLDTLDKIVELPVDGLHVDISAAPAQLETIVNRLPSDWVLSAGVINGRNVWRADLSAILARLQPVKTLLGERLWVASSCSLLHSPVDLDLEGDLSAETRSWFAFAKQKVTEVALLGRALEGDAAAILACDTYSQPIVARKSSHIVNKASVQTRINNITAALAERSAPYIERAHHQAEVLGLPFLPTTTIGSFPQTGEIRTERSAYRQGKLSEQEYVQALKGHIADAVKRQEALGLDVLVHGEAERNDMVEYFAENLAGFQTTQFGWVQSYGSRCVKPAIVVADIEREKPITVEWSTYAQSLTSKQMKGMLTGPVTILCWTFPREDISRQEIAQQLALALRDEVADLQDAGINIIQIDEPAIREGLPLKKRDHQTYLDWAVQAFKISAGSARPETQIHTHMCYSEFNEIIESVAALDADVITIETSRSNMELLKAFEEFNYPNEIGPGVYDIHSPNIPAQAWIEDLLRKAAEKIPAQRLWVNPDCGLKTRNWPEVEAALTNMVNAAKALRAEWQA.

5-methyltetrahydropteroyltri-L-glutamate-binding positions include R16–K19 and K118. Residues I436–S438 and E489 each bind L-homocysteine. Residues I436–S438 and E489 each bind L-methionine. 5-methyltetrahydropteroyltri-L-glutamate is bound by residues R520–C521 and W566. D604 contributes to the L-homocysteine binding site. D604 is an L-methionine binding site. Position 610 (E610) interacts with 5-methyltetrahydropteroyltri-L-glutamate. H646, C648, and E670 together coordinate Zn(2+). H699 serves as the catalytic Proton donor. C731 is a Zn(2+) binding site.

This sequence belongs to the vitamin-B12 independent methionine synthase family. Zn(2+) serves as cofactor.

It catalyses the reaction 5-methyltetrahydropteroyltri-L-glutamate + L-homocysteine = tetrahydropteroyltri-L-glutamate + L-methionine. The protein operates within amino-acid biosynthesis; L-methionine biosynthesis via de novo pathway; L-methionine from L-homocysteine (MetE route): step 1/1. Its function is as follows. Catalyzes the transfer of a methyl group from 5-methyltetrahydrofolate to homocysteine resulting in methionine formation. This chain is 5-methyltetrahydropteroyltriglutamate--homocysteine methyltransferase, found in Vibrio cholerae serotype O1 (strain ATCC 39315 / El Tor Inaba N16961).